A 571-amino-acid polypeptide reads, in one-letter code: Proline--tRNA ligase (571 aa).

This sequence belongs to the class-II aminoacyl-tRNA synthetase family. ProS type 1 subfamily. As to quaternary structure, homodimer.

The protein localises to the cytoplasm. The catalysed reaction is tRNA(Pro) + L-proline + ATP = L-prolyl-tRNA(Pro) + AMP + diphosphate. In terms of biological role, catalyzes the attachment of proline to tRNA(Pro) in a two-step reaction: proline is first activated by ATP to form Pro-AMP and then transferred to the acceptor end of tRNA(Pro). As ProRS can inadvertently accommodate and process non-cognate amino acids such as alanine and cysteine, to avoid such errors it has two additional distinct editing activities against alanine. One activity is designated as 'pretransfer' editing and involves the tRNA(Pro)-independent hydrolysis of activated Ala-AMP. The other activity is designated 'posttransfer' editing and involves deacylation of mischarged Ala-tRNA(Pro). The misacylated Cys-tRNA(Pro) is not edited by ProRS. The sequence is that of Proline--tRNA ligase from Vibrio vulnificus (strain YJ016).